Reading from the N-terminus, the 84-residue chain is Toxin CsE9 (84 aa).

The N-terminal stretch at methionine 1–alanine 19 is a signal peptide. The LCN-type CS-alpha/beta domain occupies glutamate 20–lysine 83. Disulfide bonds link cysteine 31–cysteine 82, cysteine 35–cysteine 58, cysteine 44–cysteine 63, and cysteine 48–cysteine 65.

This sequence belongs to the long (4 C-C) scorpion toxin superfamily. Sodium channel inhibitor family. Beta subfamily. In terms of tissue distribution, expressed by the venom gland.

The protein localises to the secreted. Beta toxins bind voltage-independently at site-4 of sodium channels (Nav) and shift the voltage of activation toward more negative potentials thereby affecting sodium channel activation and promoting spontaneous and repetitive firing. In Centruroides sculpturatus (Arizona bark scorpion), this protein is Toxin CsE9.